The sequence spans 206 residues: Uridine kinase (206 aa).

Gly9–Thr16 contributes to the ATP binding site.

This sequence belongs to the uridine kinase family.

It localises to the cytoplasm. The enzyme catalyses uridine + ATP = UMP + ADP + H(+). The catalysed reaction is cytidine + ATP = CMP + ADP + H(+). The protein operates within pyrimidine metabolism; CTP biosynthesis via salvage pathway; CTP from cytidine: step 1/3. It functions in the pathway pyrimidine metabolism; UMP biosynthesis via salvage pathway; UMP from uridine: step 1/1. The polypeptide is Uridine kinase (Borrelia duttonii (strain Ly)).